The following is a 143-amino-acid chain: MKTYIPKKDDIQRKWYVVDATDVVLGRLSTEVASILRGKNKPMFTPNADVGDYVIVINAEKVKLTGKKLEQKELRHYTGYAGGLKSITYKDLMQKDPERAVTHAIVGMLPHNSLGRQMAKKLRVYRGADHDHIAQNPEVLEIK.

This sequence belongs to the universal ribosomal protein uL13 family. Part of the 50S ribosomal subunit.

In terms of biological role, this protein is one of the early assembly proteins of the 50S ribosomal subunit, although it is not seen to bind rRNA by itself. It is important during the early stages of 50S assembly. The chain is Large ribosomal subunit protein uL13 from Finegoldia magna (strain ATCC 29328 / DSM 20472 / WAL 2508) (Peptostreptococcus magnus).